Reading from the N-terminus, the 235-residue chain is Probable transcriptional regulatory protein Ccur92_05350 (235 aa).

It belongs to the TACO1 family.

The protein resides in the cytoplasm. This is Probable transcriptional regulatory protein Ccur92_05350 from Campylobacter curvus (strain 525.92).